The sequence spans 474 residues: Histone H2B.v2 (474 aa).

Disordered regions lie at residues 99-123 (FNNG…QNEL), 276-295 (TTFT…ISGD), and 328-394 (FNDN…VNNN). 3 stretches are compositionally biased toward low complexity: residues 100-110 (NNGGNNNNNNE), 276-286 (TTFTQQEQQEQ), and 329-368 (NDNN…NNKN).

This sequence belongs to the histone H2B family.

In Dictyostelium discoideum (Social amoeba), this protein is Histone H2B.v2 (H2Bv2).